We begin with the raw amino-acid sequence, 275 residues long: 3',5'-cyclic adenosine monophosphate phosphodiesterase CpdA (275 aa).

7 residues coordinate Fe cation: Asp22, His24, Asp64, Asn94, His164, His203, and His205. AMP contacts are provided by residues His24, Asp64, and 94-95 (NH). His205 is an AMP binding site.

The protein belongs to the cyclic nucleotide phosphodiesterase class-III family. Fe(2+) is required as a cofactor.

It catalyses the reaction 3',5'-cyclic AMP + H2O = AMP + H(+). Hydrolyzes cAMP to 5'-AMP. Plays an important regulatory role in modulating the intracellular concentration of cAMP, thereby influencing cAMP-dependent processes. The protein is 3',5'-cyclic adenosine monophosphate phosphodiesterase CpdA of Escherichia coli O157:H7.